A 957-amino-acid chain; its full sequence is Receptor-like protein 34 (957 aa).

The signal sequence occupies residues 1-31 (MKGSWVVSTSIIRITLSFTFLFICHFSDVLA). The Extracellular segment spans residues 32 to 910 (APTRHLCRPE…EEEDEDLISW (879 aa)). 7 N-linked (GlcNAc...) asparagine glycosylation sites follow: asparagine 78, asparagine 101, asparagine 114, asparagine 143, asparagine 167, asparagine 191, and asparagine 215. LRR repeat units lie at residues 120-143 (LHFL…SIEN), 144-167 (LSHL…SIGN), 168-192 (LSRL…IGNL), 194-216 (HLTF…IGNL), 217-240 (SHLT…IGGL), 241-264 (SNLT…IGNL), 266-287 (QLIV…SFGN), 288-312 (LNQL…LLNL), 313-336 (TGLS…ITSL), 338-360 (NLMA…LFII), 361-384 (PSLT…NISS), 386-409 (SNLQ…ISKL), 412-434 (LQEL…IFSH), 435-459 (LKSL…ILPY), 460-483 (FKTL…SVSS), 487-510 (SQSI…LRTQ), 511-534 (HELG…LWTL), and 535-557 (PNLF…TKPE). Residues asparagine 242 and asparagine 263 are each glycosylated (N-linked (GlcNAc...) asparagine). 2 N-linked (GlcNAc...) asparagine glycosylation sites follow: asparagine 311 and asparagine 332. Asparagine 381 carries an N-linked (GlcNAc...) asparagine glycan. Asparagine 477 carries an N-linked (GlcNAc...) asparagine glycan. Residues asparagine 541, asparagine 544, asparagine 569, asparagine 593, asparagine 608, and asparagine 618 are each glycosylated (N-linked (GlcNAc...) asparagine). An LRR 19; degenerate repeat occupies 558–580 (PSMAYLLGSNNNFTGKIPSFICE). LRR repeat units lie at residues 581–605 (LRSL…MENL), 606–630 (KSNL…IFES), 632–652 (RSLD…LRFF), 653–675 (SNLE…WLSS), 677–698 (QKLQ…QALF), 699–722 (PKLR…YFVE), 765–789 (LTIY…IGLL), 790–813 (KELH…IGNL), 815–837 (ALES…IGNL), and 839–862 (LLSY…QFLT). A glycan (N-linked (GlcNAc...) asparagine) is linked at asparagine 712. N-linked (GlcNAc...) asparagine glycosylation is found at asparagine 796, asparagine 812, asparagine 836, and asparagine 844. Residues 911-931 (IAAAIGFGPGIAFGLMFGYIL) form a helical membrane-spanning segment. Residues 932–957 (VSYKPEWFMNPFGRNNRRRKRHTTTH) lie on the Cytoplasmic side of the membrane.

Belongs to the RLP family.

The protein resides in the cell membrane. The polypeptide is Receptor-like protein 34 (Arabidopsis thaliana (Mouse-ear cress)).